The following is a 340-amino-acid chain: Phosphoribosylformylglycinamidine cyclo-ligase (340 aa).

This sequence belongs to the AIR synthase family.

The protein localises to the cytoplasm. It catalyses the reaction 2-formamido-N(1)-(5-O-phospho-beta-D-ribosyl)acetamidine + ATP = 5-amino-1-(5-phospho-beta-D-ribosyl)imidazole + ADP + phosphate + H(+). Its pathway is purine metabolism; IMP biosynthesis via de novo pathway; 5-amino-1-(5-phospho-D-ribosyl)imidazole from N(2)-formyl-N(1)-(5-phospho-D-ribosyl)glycinamide: step 2/2. In Streptococcus pneumoniae serotype 2 (strain D39 / NCTC 7466), this protein is Phosphoribosylformylglycinamidine cyclo-ligase.